The primary structure comprises 345 residues: Dihydroorotate dehydrogenase (quinone) (345 aa).

Residues 65 to 69 and T89 each bind FMN; that span reads AGLDK. K69 provides a ligand contact to substrate. 114-118 lines the substrate pocket; the sequence is NRMGF. Positions 142 and 175 each coordinate FMN. N175 contacts substrate. S178 acts as the Nucleophile in catalysis. N180 is a substrate binding site. Residues K220 and T248 each coordinate FMN. Substrate is bound at residue 249–250; the sequence is NT. Residues G271, G300, and 321–322 contribute to the FMN site; that span reads YT.

Belongs to the dihydroorotate dehydrogenase family. Type 2 subfamily. As to quaternary structure, monomer. The cofactor is FMN.

It localises to the cell membrane. It catalyses the reaction (S)-dihydroorotate + a quinone = orotate + a quinol. The protein operates within pyrimidine metabolism; UMP biosynthesis via de novo pathway; orotate from (S)-dihydroorotate (quinone route): step 1/1. Catalyzes the conversion of dihydroorotate to orotate with quinone as electron acceptor. In Burkholderia mallei (strain NCTC 10247), this protein is Dihydroorotate dehydrogenase (quinone).